The following is a 767-amino-acid chain: Ribonucleoside-diphosphate reductase subunit alpha (767 aa).

A disordered region spans residues 1 to 30; sequence MHPTLISAPISSSANDAHAGTSQGSHQGHR. The span at 9-26 shows a compositional bias: polar residues; it reads PISSSANDAHAGTSQGSH. One can recognise an ATP-cone domain in the interval 31-120; the sequence is IQVIRRDGSS…VWSLWKDTLV (90 aa). Residues T228, 243-244, G272, 460-464, and 631-635 contribute to the substrate site; these read SC, NLCCE, and PNTSS. The cysteines at positions 244 and 478 are disulfide-linked. N460 serves as the catalytic Proton acceptor. C462 (cysteine radical intermediate) is an active-site residue. Residue E464 is the Proton acceptor of the active site.

The protein belongs to the ribonucleoside diphosphate reductase large chain family. In terms of assembly, tetramer of two alpha and two beta subunits.

The catalysed reaction is a 2'-deoxyribonucleoside 5'-diphosphate + [thioredoxin]-disulfide + H2O = a ribonucleoside 5'-diphosphate + [thioredoxin]-dithiol. With respect to regulation, under complex allosteric control mediated by deoxynucleoside triphosphates and ATP binding. The type of nucleotide bound at the specificity site determines substrate preference. It seems probable that ATP makes the enzyme reduce CDP and UDP, dGTP favors ADP reduction and dTTP favors GDP reduction. In terms of biological role, provides the precursors necessary for DNA synthesis. Catalyzes the biosynthesis of deoxyribonucleotides from the corresponding ribonucleotides. The polypeptide is Ribonucleoside-diphosphate reductase subunit alpha (nrdA) (Synechocystis sp. (strain ATCC 27184 / PCC 6803 / Kazusa)).